We begin with the raw amino-acid sequence, 572 residues long: Formate--tetrahydrofolate ligase (572 aa).

Thr-65 to Thr-72 is an ATP binding site.

It belongs to the formate--tetrahydrofolate ligase family.

The catalysed reaction is (6S)-5,6,7,8-tetrahydrofolate + formate + ATP = (6R)-10-formyltetrahydrofolate + ADP + phosphate. It participates in one-carbon metabolism; tetrahydrofolate interconversion. The protein is Formate--tetrahydrofolate ligase of Chloroflexus aurantiacus (strain ATCC 29366 / DSM 635 / J-10-fl).